Consider the following 380-residue polypeptide: Cytochrome b (380 aa).

4 helical membrane passes run Phe-34–Thr-54, Trp-78–Ile-99, Trp-114–Leu-134, and Phe-179–Thr-199. 2 residues coordinate heme b: His-84 and His-98. His-183 and His-197 together coordinate heme b. A ubiquinone is bound at residue His-202. The next 4 helical transmembrane spans lie at Leu-227 to Ser-247, Leu-289 to His-309, Leu-321 to Ser-341, and Phe-348 to Pro-368.

This sequence belongs to the cytochrome b family. The cytochrome bc1 complex contains 11 subunits: 3 respiratory subunits (MT-CYB, CYC1 and UQCRFS1), 2 core proteins (UQCRC1 and UQCRC2) and 6 low-molecular weight proteins (UQCRH/QCR6, UQCRB/QCR7, UQCRQ/QCR8, UQCR10/QCR9, UQCR11/QCR10 and a cleavage product of UQCRFS1). This cytochrome bc1 complex then forms a dimer. Heme b serves as cofactor.

The protein resides in the mitochondrion inner membrane. Functionally, component of the ubiquinol-cytochrome c reductase complex (complex III or cytochrome b-c1 complex) that is part of the mitochondrial respiratory chain. The b-c1 complex mediates electron transfer from ubiquinol to cytochrome c. Contributes to the generation of a proton gradient across the mitochondrial membrane that is then used for ATP synthesis. This Pinguinus impennis (Great auk) protein is Cytochrome b (MT-CYB).